A 54-amino-acid chain; its full sequence is UPF0391 membrane protein Pmen_0080 (54 aa).

2 helical membrane-spanning segments follow: residues 4 to 24 (WALTFLIIAIIAAVLGFGGIA) and 28 to 48 (AGIAKILFVVFLVLFIISFIM).

The protein belongs to the UPF0391 family.

It localises to the cell membrane. This chain is UPF0391 membrane protein Pmen_0080, found in Ectopseudomonas mendocina (strain ymp) (Pseudomonas mendocina).